The following is a 172-amino-acid chain: Putative phosphoesterase BC_1225 (172 aa).

Histidine 34 (proton donor) is an active-site residue. 2 short sequence motifs (HXTX) span residues 34 to 37 (HITL) and 115 to 118 (HLTI). The active-site Proton acceptor is histidine 115.

It belongs to the 2H phosphoesterase superfamily. YjcG family.

The sequence is that of Putative phosphoesterase BC_1225 from Bacillus cereus (strain ATCC 14579 / DSM 31 / CCUG 7414 / JCM 2152 / NBRC 15305 / NCIMB 9373 / NCTC 2599 / NRRL B-3711).